Consider the following 337-residue polypeptide: Viral cathepsin (337 aa).

Positions 1–19 (MTLLMIFTILLVASSQIEG) are cleaved as a signal peptide. Positions 20–126 (HLKFDIHDAQ…DAPPDVHDEL (107 aa)) are cleaved as a propeptide — activation peptide. 3 cysteine pairs are disulfide-bonded: Cys-147–Cys-188, Cys-181–Cys-221, and Cys-276–Cys-324. The active site involves Cys-150. Residue Asn-172 is glycosylated (N-linked (GlcNAc...) asparagine; by host). Catalysis depends on residues His-283 and Asn-303.

It belongs to the peptidase C1 family. Post-translationally, synthesized as an inactive proenzyme and activated by proteolytic removal of the inhibitory propeptide.

It catalyses the reaction Endopeptidase of broad specificity, hydrolyzing substrates of both cathepsin L and cathepsin B.. Its function is as follows. Cysteine protease that plays an essential role in host liquefaction to facilitate horizontal transmission of the virus. May participate in the degradation of foreign protein expressed by the baculovirus system. In Adoxophyes honmai (Smaller tea tortrix moth), this protein is Viral cathepsin (VCATH).